Consider the following 309-residue polypeptide: Low density lipoprotein receptor adapter protein 1-B (309 aa).

A PID domain is found at 41 to 195; that stretch reads LLEGMLFHLK…SDGEGASSSQ (155 aa). A disordered region spans residues 179–201; that stretch reads DKREKSGSDGEGASSSQSDGSSS. The span at 189–201 shows a compositional bias: low complexity; sequence EGASSSQSDGSSS. The short motif at 213–217 is the Clathrin box element; sequence LLDFE. Residues 250 to 277 form an AP-2 complex binding region; it reads WELDDGLDEAFARLAESRTNPQVLDIGL. The [DE]-X(1,2)-F-X-X-[FL]-X-X-X-R motif motif lies at 258–267; sequence EAFARLAESR.

In terms of assembly, interacts (via PID domain) with ldlr (via NPXY motif). Binds to soluble clathrin trimers and to the adapter protein complex 2 (AP-2, beta 2 subunit). Binds to phosphoinositides, which regulate clathrin bud assembly at the cell surface. Interacts with the VLDL receptor (vldlr). Interacts with the vitellogenin receptor. In terms of tissue distribution, expressed at high level during oogenesis and embryogenesis. Found at low level in the adult liver and spleen. Found at very low level in testis and heart. Not found in the oocyte vegetal cortex.

Its subcellular location is the cytoplasm. In terms of biological role, adapter protein (clathrin-associated sorting protein (CLASP)) required for efficient endocytosis of the LDL receptor (LDLR). Also involved in the vitellogenin receptor mediated endocytosis of nutrients during oogenesis. The chain is Low density lipoprotein receptor adapter protein 1-B from Xenopus laevis (African clawed frog).